We begin with the raw amino-acid sequence, 460 residues long: MAESVDHKELSESNQEELGSQVMAEGPGESQDRSEGVSIEPGDGGQHGEETVAAGVGEEGKGEEAAAGSGEDAGKCGGTDEDSDSDRPKGLIGYLLDTDFVESLPVKVKCRVLALKKLQTRAAHLESKFLREFHDIERKFAEMYQPLLEKRRQIINAVYEPTEEECEYKSDCEDYFEEEMDEEEETNGNEDGMVHEYVDEDDGYEDCYYDYDDEEEEEEEDDSAGATGGEEVNEEDPKGIPDFWLTVLKNVEALTPMIKKYDEPILKLLTDIKVKLSDPGEPLSFTLEFHFKPNEYFKNELLTKTYVLKSKLACYDPHPYRGTAIEYATGCDIDWNEGKNVTLRTIKKKQRHRVWGTVRTVTEDFPKDSFFNFFSPHGISLNGGDENDDFLLGHNLRTYIIPRSVLFFSGDALESQQEGVVREVNDEIYDKIIYDDWMAAIEEVKACCKNLEALVEDIDR.

Over residues 1 to 11 the composition is skewed to basic and acidic residues; it reads MAESVDHKELS. Disordered regions lie at residues 1–87 and 213–238; these read MAES…DSDR and DEEE…EDPK. A compositionally biased stretch (acidic residues) spans 213-223; the sequence is DEEEEEEEDDS. A Nuclear localization signal motif is present at residues 346–352; sequence IKKKQRH.

It belongs to the nucleosome assembly protein (NAP) family. Brain, specifically expressed in neurons.

The protein localises to the nucleus. Its function is as follows. Acidic protein which may be involved in interactions with other proteins or DNA. The protein is Nucleosome assembly protein 1-like 2 (Nap1l2) of Mus musculus (Mouse).